We begin with the raw amino-acid sequence, 767 residues long: Pyrin (767 aa).

Residues Met-1–Thr-92 form the Pyrin domain. The interval His-94–Gly-219 is disordered. Polar residues-rich tracts occupy residues Gly-126–Ala-142, Leu-165–Thr-176, and Thr-183–Gly-208. Ser-241 bears the Phosphoserine mark. The interval Thr-311–Ser-346 is disordered. Residues Thr-321–Thr-340 show a composition bias toward polar residues. The B box-type zinc-finger motif lies at Gln-439–Ile-481. Zn(2+)-binding residues include Cys-444, His-447, Cys-467, and His-473. Positions Ile-481–Arg-510 form a coiled coil. The interval Lys-489–Met-647 is required for homotrimerization and induction of pyroptosomes. Residues Gly-697 to Ile-719 are disordered.

As to quaternary structure, homotrimer. Interacts (via the B box-type zinc finger) with PSTPIP1. Interacts (via the B30.2/SPRY domain) with several components of the inflammasome complex, including CASP1 p20 and p10 subunits, CASP5, PYCARD, NLRP1, NLRP2 and NLRP3, as well as with unprocessed IL1B; this interaction may lead to autophagic degradation of these proteins. Component of the AIM2 PANoptosome complex, a multiprotein complex that drives inflammatory cell death (PANoptosis). Interacts with NFKBIA and RELA. Interacts weakly with VASP and ACTR3. Interacts with active ULK1 (phosphorylated on 'Ser-317') and BECN1 simultaneously. Also interacts with ATG16L1 (via WD repeats), and with ATG8 family members, including GABARAP, GABARAPL1 and, to a lesser extent, GABARAPL2, MAP1LC3A/LC3A and MAP1LC3C/LC3C. Interacts with TRIM21. Interacts with YWHAB, YWHAE, YWHAG, YWHAH, YWHAQ and YWHAZ; the interaction is required for the down-regulation of pyrin pro-inflammatory activity. In terms of processing, phosphorylation at Ser-241 is required for the interaction with 14-3-3 proteins and down-regulation of pyrin pro-inflammatory activity. Post-translationally, degraded along with the delivery of its substrates to autolysosomal compartments (at protein level). Expressed in spleen peripheral blood granulocytes. Not expressed in lymphocytes, thymus, testis, ovary, heart, brain, lung, liver, kidney and muscle.

The protein resides in the cytoplasm. Its subcellular location is the cytoskeleton. It localises to the cell projection. The protein localises to the ruffle. It is found in the lamellipodium. The protein resides in the cytoplasmic vesicle. Its subcellular location is the autophagosome. It localises to the nucleus. Involved in the regulation of innate immunity and the inflammatory response in response to IFNG/IFN-gamma. Organizes autophagic machinery by serving as a platform for the assembly of ULK1, Beclin 1/BECN1, ATG16L1, and ATG8 family members and recognizes specific autophagy targets, thus coordinating target recognition with assembly of the autophagic apparatus and initiation of autophagy. Acts as an autophagy receptor for the degradation of several inflammasome components, including CASP1, NLRP1 and NLRP3, hence preventing excessive IL1B- and IL18-mediated inflammation. However, it can also have a positive effect in the inflammatory pathway, acting as an innate immune sensor that triggers PYCARD/ASC specks formation, caspase-1 activation, and IL1B and IL18 production. Together with AIM2, also acts as a mediator of pyroptosis, necroptosis and apoptosis (PANoptosis), an integral part of host defense against pathogens, in response to bacterial infection. It is required for PSTPIP1-induced PYCARD/ASC oligomerization and inflammasome formation. Recruits PSTPIP1 to inflammasomes, and is required for PSTPIP1 oligomerization. This Mus musculus (Mouse) protein is Pyrin.